Here is a 429-residue protein sequence, read N- to C-terminus: Phosphoribosylamine--glycine ligase (429 aa).

The region spanning 109-316 (KDFLARHQIP…LVDLCLAACD (208 aa)) is the ATP-grasp domain. Residue 135–196 (LREKGAPIVI…EEFLDGEEAS (62 aa)) participates in ATP binding. Mg(2+) is bound by residues glutamate 286 and asparagine 288.

It belongs to the GARS family. Monomer. Mg(2+) is required as a cofactor. It depends on Mn(2+) as a cofactor.

It carries out the reaction 5-phospho-beta-D-ribosylamine + glycine + ATP = N(1)-(5-phospho-beta-D-ribosyl)glycinamide + ADP + phosphate + H(+). It functions in the pathway purine metabolism; IMP biosynthesis via de novo pathway; N(1)-(5-phospho-D-ribosyl)glycinamide from 5-phospho-alpha-D-ribose 1-diphosphate: step 2/2. The chain is Phosphoribosylamine--glycine ligase from Salmonella typhimurium (strain LT2 / SGSC1412 / ATCC 700720).